The primary structure comprises 474 residues: Pyruvate kinase (474 aa).

Arg32 provides a ligand contact to substrate. Positions 34, 36, and 66 each coordinate K(+). 34 to 37 (NFSH) serves as a coordination point for ATP. ATP-binding residues include Arg73 and Lys155. Glu221 lines the Mg(2+) pocket. Residues Gly244, Asp245, and Thr277 each contribute to the substrate site. Asp245 lines the Mg(2+) pocket.

The protein belongs to the pyruvate kinase family. Homotetramer. Mg(2+) is required as a cofactor. It depends on K(+) as a cofactor.

It catalyses the reaction pyruvate + ATP = phosphoenolpyruvate + ADP + H(+). It participates in carbohydrate degradation; glycolysis; pyruvate from D-glyceraldehyde 3-phosphate: step 5/5. This chain is Pyruvate kinase (pykF), found in Clostridium perfringens (strain 13 / Type A).